The sequence spans 147 residues: Protein SprT-like (147 aa).

In terms of domain architecture, SprT-like spans 9–142; the sequence is AKVKEISLTY…CGKCRGKLIL (134 aa). Position 65 (His65) interacts with Zn(2+). Glu66 is an active-site residue. His69 is a binding site for Zn(2+).

The protein belongs to the SprT family. The cofactor is Zn(2+).

It is found in the cytoplasm. The protein is Protein SprT-like (yciD) of Lactococcus lactis subsp. lactis (strain IL1403) (Streptococcus lactis).